The sequence spans 109 residues: MFEIKTVALFVLTAIAEIVGCYLPYLWLRQGASIWLLVPAALALGIFVWLLSLHPEAAGRVYAAYGGAYVAVALAWLWVVDGIKPTNWDFVGVAVTLAGMGIILFAPRA.

Helical transmembrane passes span 7 to 27 (VALFVLTAIAEIVGCYLPYLW), 31 to 51 (GASIWLLVPAALALGIFVWLL), 63 to 83 (AAYGGAYVAVALAWLWVVDGI), and 87 to 107 (NWDFVGVAVTLAGMGIILFAP).

This sequence belongs to the UPF0060 family.

It is found in the cell inner membrane. This chain is UPF0060 membrane protein mma_0129, found in Janthinobacterium sp. (strain Marseille) (Minibacterium massiliensis).